A 213-amino-acid polypeptide reads, in one-letter code: Octanoyltransferase (213 aa).

Residues 32–207 (ESTLDEIWLV…NILALLNNPD (176 aa)) enclose the BPL/LPL catalytic domain. Substrate contacts are provided by residues 71–78 (RGGQVTYH), 138–140 (SLG), and 151–153 (GLA). Cysteine 169 (acyl-thioester intermediate) is an active-site residue.

The protein belongs to the LipB family.

Its subcellular location is the cytoplasm. The catalysed reaction is octanoyl-[ACP] + L-lysyl-[protein] = N(6)-octanoyl-L-lysyl-[protein] + holo-[ACP] + H(+). The protein operates within protein modification; protein lipoylation via endogenous pathway; protein N(6)-(lipoyl)lysine from octanoyl-[acyl-carrier-protein]: step 1/2. Catalyzes the transfer of endogenously produced octanoic acid from octanoyl-acyl-carrier-protein onto the lipoyl domains of lipoate-dependent enzymes. Lipoyl-ACP can also act as a substrate although octanoyl-ACP is likely to be the physiological substrate. The sequence is that of Octanoyltransferase from Escherichia coli O17:K52:H18 (strain UMN026 / ExPEC).